Reading from the N-terminus, the 274-residue chain is Large ribosomal subunit protein uL2cz/uL2cy (274 aa).

A disordered region spans residues 224–274 (NPVDHPHGGGEGRAPIGRKKPATPWGYPALGRRSRKRNKYSDNLILRRRSK).

Belongs to the universal ribosomal protein uL2 family. Part of the 50S ribosomal subunit.

The protein resides in the plastid. Its subcellular location is the chloroplast. The protein is Large ribosomal subunit protein uL2cz/uL2cy (rpl2-A) of Carica papaya (Papaya).